We begin with the raw amino-acid sequence, 74 residues long: MAKKFDFNQGLIDLEKIVKTMESGDLSLENSLDYFSKGVALTKLCQSALNEAEQKIFMLTEQDNYTNENPLKDL.

The protein belongs to the XseB family. Heterooligomer composed of large and small subunits.

The protein localises to the cytoplasm. It carries out the reaction Exonucleolytic cleavage in either 5'- to 3'- or 3'- to 5'-direction to yield nucleoside 5'-phosphates.. Bidirectionally degrades single-stranded DNA into large acid-insoluble oligonucleotides, which are then degraded further into small acid-soluble oligonucleotides. This chain is Exodeoxyribonuclease 7 small subunit, found in Ruthia magnifica subsp. Calyptogena magnifica.